A 155-amino-acid chain; its full sequence is Lectin-like protein EP153R (155 aa).

Topologically, residues 1 to 30 (MYFKKKYIGLIDKNCEKKILDDCTTIKICY) are cytoplasmic. The chain crosses the membrane as a helical span at residues 31–51 (ILIGILIGTNMITLIYNFIFW). The Extracellular segment spans residues 52–155 (DHYMTCNKKD…YLPLLFICSK (104 aa)). A disulfide bridge links Cys-66 with Cys-77. The tract at residues 66–154 (CPKDWVGYNN…KYLPLLFICS (89 aa)) is lectin-like. N-linked (GlcNAc...) asparagine; by host glycans are attached at residues Asn-82, Asn-86, Asn-98, Asn-104, Asn-110, Asn-124, Asn-130, and Asn-137. Cys-94 and Cys-153 are oxidised to a cystine.

This sequence belongs to the asfivirus lectin-like protein family. As to quaternary structure, homodimer.

It is found in the host endoplasmic reticulum membrane. Down-regulates MHC-I expression by impairing the appropriate configuration or presentation into the plasma membrane of the latter. Participates in viral hemadsorption, which may help viral spread. Reduces the transactivating activity of host TP53, thus inhibiting apoptosis. Non-essential for virus growth in swine macrophage cell cultures. This chain is Lectin-like protein EP153R, found in Ornithodoros (relapsing fever ticks).